Here is a 102-residue protein sequence, read N- to C-terminus: MKKVLALVVAAAMGLSSAAFAAETATTPAPTATTTKAAPAKTTHHKKQHKAAPAQKAQAAKKHHKNTKAEQKAPEQKAQAAKKHAGKHGHQQPAKPAAQPAA.

A signal peptide spans 1–21 (MKKVLALVVAAAMGLSSAAFA). Residues 22 to 41 (AETATTPAPTATTTKAAPAK) show a composition bias toward low complexity. A propeptide spanning residues 22-58 (AETATTPAPTATTTKAAPAKTTHHKKQHKAAPAQKAQ) is cleaved from the precursor. The disordered stretch occupies residues 22-102 (AETATTPAPT…PAKPAAQPAA (81 aa)). The segment covering 80–90 (AAKKHAGKHGH) has biased composition (basic residues). Over residues 91–102 (QQPAKPAAQPAA) the composition is skewed to low complexity.

It belongs to the Asr family. Proteolytic processing gives rise to the active protein.

The protein resides in the periplasm. Its function is as follows. Required for growth and/or survival at acidic conditions. This is Acid shock protein from Shigella flexneri.